We begin with the raw amino-acid sequence, 120 residues long: Ribonuclease P protein component 2 (120 aa).

The protein belongs to the eukaryotic/archaeal RNase P protein component 2 family. As to quaternary structure, homodimer in solution. Component of RNase P which consists of a catalytic RNA component and at least 5 protein subunits. Forms a heterotetrameric subcomplex with Rnp3. Reconstituted enzyme missing individual protein subunits is suboptimally active, showing each subunit contributes to optimization of activity.

The protein localises to the cytoplasm. It catalyses the reaction Endonucleolytic cleavage of RNA, removing 5'-extranucleotides from tRNA precursor.. Its function is as follows. Part of ribonuclease P, a protein complex that generates mature tRNA molecules by cleaving their 5'-ends. The sequence is that of Ribonuclease P protein component 2 from Pyrococcus horikoshii (strain ATCC 700860 / DSM 12428 / JCM 9974 / NBRC 100139 / OT-3).